The chain runs to 262 residues: Shikimate dehydrogenase (NADP(+)) (262 aa).

Shikimate is bound by residues 13–15 (SLS) and Thr-59. Residue Lys-63 is the Proton acceptor of the active site. Residue Asp-75 participates in NADP(+) binding. The shikimate site is built by Asn-84 and Asp-99. NADP(+) contacts are provided by residues 122 to 126 (GAGGA), 144 to 149 (NRTLEK), and Met-205. Position 207 (Tyr-207) interacts with shikimate. Gly-228 serves as a coordination point for NADP(+).

The protein belongs to the shikimate dehydrogenase family. In terms of assembly, homodimer.

The enzyme catalyses shikimate + NADP(+) = 3-dehydroshikimate + NADPH + H(+). It functions in the pathway metabolic intermediate biosynthesis; chorismate biosynthesis; chorismate from D-erythrose 4-phosphate and phosphoenolpyruvate: step 4/7. In terms of biological role, involved in the biosynthesis of the chorismate, which leads to the biosynthesis of aromatic amino acids. Catalyzes the reversible NADPH linked reduction of 3-dehydroshikimate (DHSA) to yield shikimate (SA). This Ignicoccus hospitalis (strain KIN4/I / DSM 18386 / JCM 14125) protein is Shikimate dehydrogenase (NADP(+)).